Reading from the N-terminus, the 275-residue chain is Reticulon-like protein B1 (275 aa).

2 stretches are compositionally biased toward basic and acidic residues: residues 1–10 (MAEEHKHDES) and 20–38 (VVERESLMDKISEKIHHGG). The tract at residues 1 to 68 (MAEEHKHDES…PSSPSSSMKS (68 aa)) is disordered. N-acetylalanine is present on A2. A compositionally biased stretch (low complexity) spans 59–68 (PSSPSSSMKS). Positions 89–274 (PADIFMWKNK…PLGPLKNKKK (186 aa)) constitute a Reticulon domain. The next 3 helical transmembrane spans lie at 99–119 (KMSGGVLGGATAAWVVFELME), 120–140 (YHLLTLLCHVMIVVLAVLFLW), and 194–214 (FLIAIAGLWVLSILGGCFNFL).

Interacts with VirB2. In terms of tissue distribution, predominantly expressed in root tissues.

It is found in the endoplasmic reticulum membrane. The protein resides in the cell membrane. Plays a role in the Agrobacterium-mediated plant transformation via its interaction with VirB2, the major component of the T-pilus. This is Reticulon-like protein B1 (RTNLB1) from Arabidopsis thaliana (Mouse-ear cress).